Here is a 366-residue protein sequence, read N- to C-terminus: tRNA/tmRNA (uracil-C(5))-methyltransferase (366 aa).

Positions 190, 218, 223, 239, and 299 each coordinate S-adenosyl-L-methionine. C324 functions as the Nucleophile in the catalytic mechanism. E358 functions as the Proton acceptor in the catalytic mechanism.

This sequence belongs to the class I-like SAM-binding methyltransferase superfamily. RNA M5U methyltransferase family. TrmA subfamily.

The catalysed reaction is uridine(54) in tRNA + S-adenosyl-L-methionine = 5-methyluridine(54) in tRNA + S-adenosyl-L-homocysteine + H(+). It carries out the reaction uridine(341) in tmRNA + S-adenosyl-L-methionine = 5-methyluridine(341) in tmRNA + S-adenosyl-L-homocysteine + H(+). Dual-specificity methyltransferase that catalyzes the formation of 5-methyluridine at position 54 (m5U54) in all tRNAs, and that of position 341 (m5U341) in tmRNA (transfer-mRNA). The protein is tRNA/tmRNA (uracil-C(5))-methyltransferase of Klebsiella pneumoniae subsp. pneumoniae (strain ATCC 700721 / MGH 78578).